The following is a 508-amino-acid chain: Photosystem II CP47 reaction center protein (508 aa).

The next 6 membrane-spanning stretches (helical) occupy residues 21-36, 101-115, 140-156, 203-218, 237-252, and 457-472; these read AVHIMHTALVSGWAGS, IVFSGLCFLAAIWHW, GIHLFLSGLACFGFGAF, IAAGTLGILAGLFHLS, VLSSSIAAVFFAAFVV, and SFALLFFFGHIWHGAR.

Belongs to the PsbB/PsbC family. PsbB subfamily. As to quaternary structure, PSII is composed of 1 copy each of membrane proteins PsbA, PsbB, PsbC, PsbD, PsbE, PsbF, PsbH, PsbI, PsbJ, PsbK, PsbL, PsbM, PsbT, PsbX, PsbY, PsbZ, Psb30/Ycf12, at least 3 peripheral proteins of the oxygen-evolving complex and a large number of cofactors. It forms dimeric complexes. Binds multiple chlorophylls. PSII binds additional chlorophylls, carotenoids and specific lipids. is required as a cofactor.

It localises to the plastid. The protein resides in the chloroplast thylakoid membrane. One of the components of the core complex of photosystem II (PSII). It binds chlorophyll and helps catalyze the primary light-induced photochemical processes of PSII. PSII is a light-driven water:plastoquinone oxidoreductase, using light energy to abstract electrons from H(2)O, generating O(2) and a proton gradient subsequently used for ATP formation. The protein is Photosystem II CP47 reaction center protein of Ranunculus macranthus (Large buttercup).